We begin with the raw amino-acid sequence, 75 residues long: Small ribosomal subunit protein bS16c (75 aa).

It belongs to the bacterial ribosomal protein bS16 family.

It is found in the plastid. Its subcellular location is the chloroplast. The chain is Small ribosomal subunit protein bS16c from Cyanidioschyzon merolae (strain NIES-3377 / 10D) (Unicellular red alga).